Consider the following 25-residue polypeptide: Superoxide dismutase [Mn], mitochondrial (25 aa).

Histidine 9 is a binding site for Mn(2+).

The protein belongs to the iron/manganese superoxide dismutase family. Homotetramer. It depends on Mn(2+) as a cofactor.

It localises to the mitochondrion matrix. The catalysed reaction is 2 superoxide + 2 H(+) = H2O2 + O2. Destroys superoxide anion radicals which are normally produced within the cells and which are toxic to biological systems. This is Superoxide dismutase [Mn], mitochondrial from Alternaria alternata (Alternaria rot fungus).